Here is a 1064-residue protein sequence, read N- to C-terminus: Bifunctional cytochrome P450/NADPH--P450 reductase ascE (1064 aa).

Residues 1–484 (MTELIPGPKG…LHGGAKKGSK (484 aa)) form a cytochrome P450 region. A heme-binding site is contributed by cysteine 411. Residues 485–1064 (IDGPSSGASL…ANRYVTEIFA (580 aa)) are NADPH-P-450 reductase. Positions 504 to 644 (MTILYGSDSG…DFERWQDDQL (141 aa)) constitute a Flavodoxin-like domain. Residues 510 to 514 (SDSGT) and 588 to 620 (VYGC…KRIA) each bind FMN. The FAD-binding FR-type domain maps to 676–905 (VDADEATVQS…KPALRLFHPP (230 aa)).

It in the N-terminal section; belongs to the cytochrome P450 family. Requires FAD as cofactor. It depends on FMN as a cofactor. Heme serves as cofactor.

It catalyses the reaction ilicicolin A + NADPH + O2 + H(+) = ilicicolin A epoxide + NADP(+) + H2O. The protein operates within secondary metabolite biosynthesis; terpenoid biosynthesis. In terms of biological role, bifunctional cytochrome P450/NADPH--P450 reductase; part of the asc-1 gene cluster that mediates the biosynthesis both ascochlorin and ascofuranone, a strong inhibitor of cyanide-insensitive alternative oxidases and a promising drug candidate against African trypanosomiasis. The first step in the pathway is performed by the non-reducing polyketide synthase ascC that produces orsellinic acid by condensing acetyl-CoA with 3 malonyl-CoA units. Orsellinic acid is then prenylated by the prenyltransferase ascA to yield ilicicolinic acid B. Ilicicolinic acid B is further reduced to ilicicolin B by the reductase ascB. The halogenase ascD then chlorinates ilicicolin B to produce ilicicolin A which is converted to ilicicolin A epoxide by the cytochrome P450 monooxygenase ascE that catalyzes stereoselective epoxidation of the terminal double bond of the prenyl group. Ilicicolin A epoxide is the last common precursor for the biosynthesis of ascofuranone and ascochlorin. The terpene cyclase ascF produces a monocyclic terpene, and the cyclization reaction is proposed to be initiated by protonation of the terminal epoxide of ilicicolin A epoxide to generate a monocyclic tertiarycation, which is followed by a series of hydride and methyl shifts with abstraction of proton, leading to the formation of the (14S,15R,19R)-trimethylcyclohexanone ring structure of ilicicolin C, which is finally reduced to ascochlorin by the dehydrogenase ascG. On the other hand, ilicicolin A epoxide is hydroxylated by the cytochrome P450 monooxygenase ascH, and the resultant product is cyclized by the terpene cyclase ascI to ascofuranol via protonation-initiated epoxide ring opening, which facilitates the 6-endo-tet cyclization to form the tetrahy-drofuran ring. Finally, ascofuranol is oxidized into ascofuranone by ascJ. This chain is Bifunctional cytochrome P450/NADPH--P450 reductase ascE, found in Acremonium egyptiacum (Oospora egyptiaca).